A 208-amino-acid chain; its full sequence is MADILTQLQTCLDQLATQFYATIGYLVTYHDNSPAIPPQNDPTAAPALAKITKNSTAPPAPAGAPAGSQASPQQQSAQIPGQQQQGGGDAGQTPGAGGGTGGAGADPNLPPAPDSPRTFASRQRELARDLVIKEQQIEYLISVLPGIDSSEAEQERRIKELEKELRSAEEDREQRVRELRKLRKKLENVLGAVEVGIYGDRGAVASRR.

A disordered region spans residues 52–122; that stretch reads TKNSTAPPAP…PDSPRTFASR (71 aa). Over residues 63 to 83 the composition is skewed to low complexity; that stretch reads GAPAGSQASPQQQSAQIPGQQ. The span at 84-104 shows a compositional bias: gly residues; the sequence is QQGGGDAGQTPGAGGGTGGAG. Residues 146 to 195 are a coiled coil; the sequence is GIDSSEAEQERRIKELEKELRSAEEDREQRVRELRKLRKKLENVLGAVEV.

The protein belongs to the Mediator complex subunit 21 family. As to quaternary structure, component of the Mediator complex.

It is found in the nucleus. Its function is as follows. Component of the Mediator complex, a coactivator involved in the regulated transcription of nearly all RNA polymerase II-dependent genes. Mediator functions as a bridge to convey information from gene-specific regulatory proteins to the basal RNA polymerase II transcription machinery. Mediator is recruited to promoters by direct interactions with regulatory proteins and serves as a scaffold for the assembly of a functional preinitiation complex with RNA polymerase II and the general transcription factors. The polypeptide is Mediator of RNA polymerase II transcription subunit 21 (srb7) (Aspergillus oryzae (strain ATCC 42149 / RIB 40) (Yellow koji mold)).